We begin with the raw amino-acid sequence, 200 residues long: Outer-membrane lipoprotein carrier protein (200 aa).

Positions 1-18 (MIGLFLAAPLVLSSAVWA) are cleaved as a signal peptide.

It belongs to the LolA family. Monomer.

The protein resides in the periplasm. Its function is as follows. Participates in the translocation of lipoproteins from the inner membrane to the outer membrane. Only forms a complex with a lipoprotein if the residue after the N-terminal Cys is not an aspartate (The Asp acts as a targeting signal to indicate that the lipoprotein should stay in the inner membrane). This is Outer-membrane lipoprotein carrier protein from Photobacterium profundum (strain SS9).